Consider the following 339-residue polypeptide: uncharacterized protein (339 aa).

In terms of domain architecture, ABC transporter spans 13–243 (LSLNKLDVGF…PATPFICEFI (231 aa)). 45–52 (GPSGSGKS) is an ATP binding site.

It belongs to the ABC transporter superfamily.

The protein resides in the cell inner membrane. Probably part of a binding-protein-dependent transport system y4fNOP. Probably responsible for energy coupling to the transport system. This is an uncharacterized protein from Sinorhizobium fredii (strain NBRC 101917 / NGR234).